An 875-amino-acid chain; its full sequence is Kelch-like protein 29 (875 aa).

Over residues 115-126 the composition is skewed to polar residues; it reads WGQTPINQSTPW. 2 disordered regions span residues 115 to 145 and 248 to 291; these read WGQTPINQSTPWDTDEPPSKQMRESDNPGTG and GPTA…DSAH. The span at 131–140 shows a compositional bias: basic and acidic residues; sequence PPSKQMRESD. One can recognise a BTB domain in the interval 329–401; that stretch reads TDLKIVVEGR…VYTGSLVIDS (73 aa). Kelch repeat units follow at residues 585 to 635, 637 to 683, 684 to 730, 732 to 778, 779 to 821, and 822 to 870; these read VIVL…VSAG, NIYL…VYDG, KIYT…VCGG, IYVF…TLNG, FVFI…VLDG, and KIYA…VIKK.

This Homo sapiens (Human) protein is Kelch-like protein 29 (KLHL29).